The chain runs to 333 residues: NADH-quinone oxidoreductase subunit H (333 aa).

The next 8 helical transmembrane spans lie at 15–35 (FFIFFGLAVLLLFAVLGFVTY), 88–108 (FILAPVIAFAPAFMVLAVIPF), 117–137 (IGVGLLYYIAVSGITTIGVVT), 159–179 (ISYEIPLVMSVIGIVLLAGSL), 191–211 (VWYIFVQPVGFVVFLIAAVAE), 239–259 (WAFFMLSEYVYFFGMASLITV), 274–296 (IPGAVWFALKFSSVVFLLIWFRV), and 313–333 (VLLPIALANIFLTALIKELFF).

The protein belongs to the complex I subunit 1 family. NDH-1 is composed of 14 different subunits. Subunits NuoA, H, J, K, L, M, N constitute the membrane sector of the complex.

Its subcellular location is the cell membrane. The catalysed reaction is a quinone + NADH + 5 H(+)(in) = a quinol + NAD(+) + 4 H(+)(out). NDH-1 shuttles electrons from NADH, via FMN and iron-sulfur (Fe-S) centers, to quinones in the respiratory chain. The immediate electron acceptor for the enzyme in this species is believed to be ubiquinone. Couples the redox reaction to proton translocation (for every two electrons transferred, four hydrogen ions are translocated across the cytoplasmic membrane), and thus conserves the redox energy in a proton gradient. This subunit may bind ubiquinone. The chain is NADH-quinone oxidoreductase subunit H from Bacillus thuringiensis subsp. konkukian (strain 97-27).